A 366-amino-acid chain; its full sequence is 3-dehydroquinate synthase (366 aa).

Residues 107–111, 131–132, lysine 144, and lysine 153 each bind NAD(+); these read GVIGD and TT. Glutamate 186, histidine 251, and histidine 268 together coordinate Zn(2+).

This sequence belongs to the sugar phosphate cyclases superfamily. Dehydroquinate synthase family. Requires Co(2+) as cofactor. It depends on Zn(2+) as a cofactor. NAD(+) is required as a cofactor.

The protein resides in the cytoplasm. It catalyses the reaction 7-phospho-2-dehydro-3-deoxy-D-arabino-heptonate = 3-dehydroquinate + phosphate. Its pathway is metabolic intermediate biosynthesis; chorismate biosynthesis; chorismate from D-erythrose 4-phosphate and phosphoenolpyruvate: step 2/7. Catalyzes the conversion of 3-deoxy-D-arabino-heptulosonate 7-phosphate (DAHP) to dehydroquinate (DHQ). This Microcystis aeruginosa (strain NIES-843 / IAM M-2473) protein is 3-dehydroquinate synthase.